A 300-amino-acid polypeptide reads, in one-letter code: E3 ubiquitin-protein ligase RNF212B (300 aa).

Residues 6–40 (CNQCFRKDGAHFFVTSCGHIFCKKCVTLEKCAVCG) form an RING-type zinc finger. A coiled-coil region spans residues 87 to 124 (LLIAFYKHRITKLETAMQEAQQALVSQDKELSVLRKEN). Residues 141 to 232 (YQGSRSITPR…SYRTSSASSG (92 aa)) are disordered. Polar residues predominate over residues 155 to 165 (TSPSQSVTPRP). The span at 166–182 (SFQHSSQVVSRSSSAES) shows a compositional bias: low complexity. A compositionally biased stretch (gly residues) spans 191-200 (GSLGQGGRGL). A compositionally biased stretch (polar residues) spans 211–232 (NETPSPASTHSLSYRTSSASSG).

As to quaternary structure, homodimer. Post-translationally, autoubiquitinated.

Its subcellular location is the chromosome. The catalysed reaction is S-ubiquitinyl-[E2 ubiquitin-conjugating enzyme]-L-cysteine + [acceptor protein]-L-lysine = [E2 ubiquitin-conjugating enzyme]-L-cysteine + N(6)-ubiquitinyl-[acceptor protein]-L-lysine.. It functions in the pathway protein modification; protein ubiquitination. Ubiquitin E3 ligase that acts as a crucial factor for crossing-over (CO) formation during meiosis. Essential for normal prophase I progression and for ensuring appropriate CO designation in meiosis. Recruits key components of the cross-over machinery either directly ou indirectly, leading to the activation of the MutL-gamma complex. The function of RNF212B in CO designation is dependent on its catalytic activity. The sequence is that of E3 ubiquitin-protein ligase RNF212B (RNF212B) from Homo sapiens (Human).